The primary structure comprises 500 residues: Protein gar2 (500 aa).

Composition is skewed to basic and acidic residues over residues 1-41 and 59-68; these read MAKK…KEIA and KRASSPEPSK. The segment at 1–262 is disordered; it reads MAKKDKTSVK…TKPSQDSNET (262 aa). The segment covering 69–78 has biased composition (basic residues); the sequence is KSVKKQKKSK. Residues 90–120 are compositionally biased toward low complexity; it reads ESSSSESESSSSESESSSSESESSSSESSSS. Positions 126 to 137 are enriched in basic and acidic residues; sequence VIVKTEEKKESS. Residues S143, S144, and S146 each carry the phosphoserine modification. Over residues 152-163 the composition is skewed to basic and acidic residues; that stretch reads AVVKIEEKKESS. Low complexity predominate over residues 164–182; that stretch reads SDSSSESSSSESESESSSS. Residues 191 to 201 are compositionally biased toward basic and acidic residues; sequence VEKTEEKKEGS. The span at 202–218 shows a compositional bias: low complexity; sequence SESSSDSESSSDSSSES. Residues 219-233 are compositionally biased toward acidic residues; it reads GDSDSSSDSESESSS. The span at 234 to 250 shows a compositional bias: basic and acidic residues; the sequence is EDEKKRKAEPASEERPA. RRM domains follow at residues 263–341 and 366–443; these read CTVF…LSNP and DTVF…FSTP. The interval 441-500 is disordered; it reads STPRTGGGSRGGRGGFGGRGGFGGRGGFGGGRGRGRGGARSGNPNRGSVAPFSGNKVTFD. Gly residues predominate over residues 445 to 480; that stretch reads TGGGSRGGRGGFGGRGGFGGRGGFGGGRGRGRGGAR.

Belongs to the RRM GAR family.

Its subcellular location is the nucleus. It is found in the nucleolus. Its function is as follows. Helps the assembly of pre-ribosomal particles containing 18S rRNA. This is Protein gar2 (gar2) from Schizosaccharomyces pombe (strain 972 / ATCC 24843) (Fission yeast).